Reading from the N-terminus, the 517-residue chain is Tyrosine 3-monooxygenase (517 aa).

Ser-33 is modified (phosphoserine; by PKA). Positions 345, 350, and 390 each coordinate Fe cation.

The protein belongs to the biopterin-dependent aromatic amino acid hydroxylase family. Requires Fe(2+) as cofactor.

The protein localises to the cytoplasm. Its subcellular location is the perinuclear region. It localises to the cell projection. It is found in the axon. The enzyme catalyses (6R)-L-erythro-5,6,7,8-tetrahydrobiopterin + L-tyrosine + O2 = (4aS,6R)-4a-hydroxy-L-erythro-5,6,7,8-tetrahydrobiopterin + L-dopa. It participates in catecholamine biosynthesis; dopamine biosynthesis; dopamine from L-tyrosine: step 1/2. With respect to regulation, phosphorylation leads to an increase in the catalytic activity. Involved in the synthesis of catecholamines, such as dopamine. Has a role in serotonin signaling. Required for normal explorative and foraging behavior. This Caenorhabditis briggsae protein is Tyrosine 3-monooxygenase (cat-2).